The chain runs to 444 residues: Type VI secretion system baseplate component TssK1 (444 aa).

As to quaternary structure, forms transient higher-order structures that correlated with dynamics of sheath component TssB1. Interacts with TssA1.

Core component of the H1 type VI (H1-T6SS) secretion system that plays a role in the release of toxins targeting both eukaryotic and prokaryotic species. Functions as a spatio-temporal marker for assembly of contractile apparatus made of TssB1 and TssC1. This role in assembly depends on TssM1. This is Type VI secretion system baseplate component TssK1 from Pseudomonas aeruginosa (strain ATCC 15692 / DSM 22644 / CIP 104116 / JCM 14847 / LMG 12228 / 1C / PRS 101 / PAO1).